Reading from the N-terminus, the 188-residue chain is Putative manganese efflux pump MntP (188 aa).

The next 6 helical transmembrane spans lie at 3-23 (MITL…VALG), 39-59 (LGWH…LAGL), 65-85 (IETY…GKMI), 104-124 (GMSL…VGLS), 125-145 (LAIV…IAGV), and 167-187 (IAGG…HTLG).

It belongs to the MntP (TC 9.B.29) family.

It is found in the cell inner membrane. Its function is as follows. Probably functions as a manganese efflux pump. The sequence is that of Putative manganese efflux pump MntP from Syntrophotalea carbinolica (strain DSM 2380 / NBRC 103641 / GraBd1) (Pelobacter carbinolicus).